The following is a 153-amino-acid chain: UPF0235 protein C15orf40 (153 aa).

The segment covering 1–12 (MLRLRSGLRHLR) has biased composition (basic residues). The disordered stretch occupies residues 1 to 55 (MLRLRSGLRHLRATPNTRGSARLLCAEMPKKAGATTKGKSQSKEPERPLPPLGPV). Serine 116 is modified (phosphoserine).

This sequence belongs to the UPF0235 family.

This chain is UPF0235 protein C15orf40 (C15orf40), found in Homo sapiens (Human).